We begin with the raw amino-acid sequence, 319 residues long: Beta-ketoacyl-[acyl-carrier-protein] synthase III (319 aa).

Residues Cys113 and His246 contribute to the active site. The tract at residues 247–251 (QANRR) is ACP-binding. The active site involves Asn276.

The protein belongs to the thiolase-like superfamily. FabH family. As to quaternary structure, homodimer.

The protein resides in the cytoplasm. The enzyme catalyses malonyl-[ACP] + acetyl-CoA + H(+) = 3-oxobutanoyl-[ACP] + CO2 + CoA. The protein operates within lipid metabolism; fatty acid biosynthesis. Functionally, catalyzes the condensation reaction of fatty acid synthesis by the addition to an acyl acceptor of two carbons from malonyl-ACP. Catalyzes the first condensation reaction which initiates fatty acid synthesis and may therefore play a role in governing the total rate of fatty acid production. Possesses both acetoacetyl-ACP synthase and acetyl transacylase activities. Its substrate specificity determines the biosynthesis of branched-chain and/or straight-chain of fatty acids. The sequence is that of Beta-ketoacyl-[acyl-carrier-protein] synthase III from Rhizorhabdus wittichii (strain DSM 6014 / CCUG 31198 / JCM 15750 / NBRC 105917 / EY 4224 / RW1) (Sphingomonas wittichii).